The chain runs to 45 residues: uncharacterized protein (45 aa).

Residues 15-37 form a helical membrane-spanning segment; sequence EVVGTLMAVLITFALVAVVFNFI.

It is found in the membrane. This is an uncharacterized protein from Archaeoglobus fulgidus (strain ATCC 49558 / DSM 4304 / JCM 9628 / NBRC 100126 / VC-16).